The primary structure comprises 288 residues: MILLALPNKGRISKPVNEILEKAGLKISVHGRSLFAQTVDPEIKVMFARAKDIPEFVRDGVADVGVTGYDLMLERDTEEELEMLLDFKFGNARLVIAAPENSTVNSIKDVKDGMKIATEFPGLTKRYLEKKGLNLEIIELSGATEIAPFIGVSDLICDLTSTGTTLQLNRLKEVENVVSSTTRLVANKKSMEDPEKCAKINQVLSGIKSVLYAQSKRLIMMNAPKDKVSEITSIIPGMGGPTVSEILSNDKMLAINAVIDENKVFETVTNLEMLGARDILVVPIERIL.

Belongs to the ATP phosphoribosyltransferase family. Long subfamily. Requires Mg(2+) as cofactor.

The protein localises to the cytoplasm. The enzyme catalyses 1-(5-phospho-beta-D-ribosyl)-ATP + diphosphate = 5-phospho-alpha-D-ribose 1-diphosphate + ATP. The protein operates within amino-acid biosynthesis; L-histidine biosynthesis; L-histidine from 5-phospho-alpha-D-ribose 1-diphosphate: step 1/9. With respect to regulation, feedback inhibited by histidine. Functionally, catalyzes the condensation of ATP and 5-phosphoribose 1-diphosphate to form N'-(5'-phosphoribosyl)-ATP (PR-ATP). Has a crucial role in the pathway because the rate of histidine biosynthesis seems to be controlled primarily by regulation of HisG enzymatic activity. In Methanococcus maripaludis (strain C7 / ATCC BAA-1331), this protein is ATP phosphoribosyltransferase.